The following is a 701-amino-acid chain: Protein UL29/UL28 (701 aa).

A disordered region spans residues 1–33; that stretch reads MSGRRKGCSAATASSSSSSPPSRLPPLPGHARR.

It belongs to the herpesviridae US22 family. As to quaternary structure, interacts with UL38 and host HDAC1; these interactions are necessary for the HDAC1 interaction with UL38. Interacts with host MTA2.

The protein resides in the virion. It is found in the host nucleus. It localises to the host cytoplasm. In terms of biological role, contributes to activation of immediate-early gene expression. This is Protein UL29/UL28 (UL29) from Homo sapiens (Human).